The primary structure comprises 147 residues: Large ribosomal subunit protein bL9 (147 aa).

Belongs to the bacterial ribosomal protein bL9 family.

Binds to the 23S rRNA. The sequence is that of Large ribosomal subunit protein bL9 from Bdellovibrio bacteriovorus (strain ATCC 15356 / DSM 50701 / NCIMB 9529 / HD100).